Reading from the N-terminus, the 403-residue chain is Phosphopentomutase (403 aa).

Residues Asp-13, Asp-298, His-303, Asp-339, His-340, and His-351 each coordinate Mn(2+).

This sequence belongs to the phosphopentomutase family. Mn(2+) serves as cofactor.

It is found in the cytoplasm. It catalyses the reaction 2-deoxy-alpha-D-ribose 1-phosphate = 2-deoxy-D-ribose 5-phosphate. It carries out the reaction alpha-D-ribose 1-phosphate = D-ribose 5-phosphate. It functions in the pathway carbohydrate degradation; 2-deoxy-D-ribose 1-phosphate degradation; D-glyceraldehyde 3-phosphate and acetaldehyde from 2-deoxy-alpha-D-ribose 1-phosphate: step 1/2. In terms of biological role, isomerase that catalyzes the conversion of deoxy-ribose 1-phosphate (dRib-1-P) and ribose 1-phosphate (Rib-1-P) to deoxy-ribose 5-phosphate (dRib-5-P) and ribose 5-phosphate (Rib-5-P), respectively. The protein is Phosphopentomutase of Streptococcus pneumoniae serotype 4 (strain ATCC BAA-334 / TIGR4).